We begin with the raw amino-acid sequence, 562 residues long: Phosphoacetylglucosamine mutase (562 aa).

Serine 74 acts as the Phosphoserine intermediate in catalysis. Residues serine 74, aspartate 291, aspartate 293, and aspartate 295 each contribute to the Mg(2+) site. Residues 395-397, 526-530, and arginine 535 each bind substrate; these read EAN and RPSGT.

It belongs to the phosphohexose mutase family. It depends on Mg(2+) as a cofactor.

The catalysed reaction is N-acetyl-alpha-D-glucosamine 1-phosphate = N-acetyl-D-glucosamine 6-phosphate. It functions in the pathway nucleotide-sugar biosynthesis; UDP-N-acetyl-alpha-D-glucosamine biosynthesis; N-acetyl-alpha-D-glucosamine 1-phosphate from alpha-D-glucosamine 6-phosphate (route I): step 2/2. Functionally, interconverts GlcNAc-6-P and GlcNAc-1-P. The protein is Phosphoacetylglucosamine mutase of Oryza sativa subsp. japonica (Rice).